The following is a 432-amino-acid chain: Probable exopolygalacturonase X (432 aa).

An N-terminal signal peptide occupies residues 1-23 (MKFSYSFVQVVTLLLSLSPSVEG). N113, N129, and N199 each carry an N-linked (GlcNAc...) asparagine glycan. The PbH1 1 repeat unit spans residues 231–252 (SDNIVIQNSVINNGDDCVSFKP). D245 acts as the Proton donor in catalysis. The cysteines at positions 247 and 264 are disulfide-linked. Residues N253 and N265 are each glycosylated (N-linked (GlcNAc...) asparagine). PbH1 repeat units lie at residues 254-274 (STNILVQNLHCNGSHGISVGS), 285-306 (VQNVLVYNISMYNASDGARIKV), and 327-348 (VKNVTYNQMYIENVDWAIEVTQ). H268 is an active-site residue. Residues N292, N297, N329, N354, and N364 are each glycosylated (N-linked (GlcNAc...) asparagine). A PbH1 5 repeat occupies 362–394 (PSNLTISDIHFKNFRGTTSGKRDPNVGTIVCSS). C392 and C398 are oxidised to a cystine.

Belongs to the glycosyl hydrolase 28 family.

It is found in the secreted. The catalysed reaction is [(1-&gt;4)-alpha-D-galacturonosyl](n) + H2O = alpha-D-galacturonate + [(1-&gt;4)-alpha-D-galacturonosyl](n-1). Specific in hydrolyzing the terminal glycosidic bond of polygalacturonic acid and oligogalacturonates. The polypeptide is Probable exopolygalacturonase X (pgaX) (Aspergillus fumigatus (strain CBS 144.89 / FGSC A1163 / CEA10) (Neosartorya fumigata)).